A 271-amino-acid chain; its full sequence is Glutamate racemase (271 aa).

Residues 12–13 and 44–45 each bind substrate; these read DS and YG. The active-site Proton donor/acceptor is the Cys-75. Position 76–77 (76–77) interacts with substrate; the sequence is NT. The Proton donor/acceptor role is filled by Cys-185. 186 to 187 lines the substrate pocket; sequence TH.

It belongs to the aspartate/glutamate racemases family.

It carries out the reaction L-glutamate = D-glutamate. Its pathway is cell wall biogenesis; peptidoglycan biosynthesis. Functionally, provides the (R)-glutamate required for cell wall biosynthesis. This Mycobacterium marinum (strain ATCC BAA-535 / M) protein is Glutamate racemase.